Reading from the N-terminus, the 637-residue chain is MNDWSIDAARAGYNVTHWSQGFYGISDQGEVTVSPDPKNPDHKIGLNELAKDMVKAGVALPVLVRFPQILHHRVNSLCQAFDQAIQKYEYQADYLLVYPIKVNQQKTVVEEILASQASKEVPQLGLEAGSKPELMAVLAMAQKASSVIVCNGYKDNEYIRLALIGEKLGHKVYIVLEKLSELKMVLAESKRLGVKPRLGLRARLAFQGKGKWQASGGEKSKFGLSAAQILTVVDQLKENDMLDSLQLLHFHLGSQIANIRDIRQGVSEAARFYCELRELGASINCFDVGGGLAVDYDGTRSQSNNSMNYGLSEYANNIVNVLTDICNEYEQPMPRIISESGRHLTAHHAVLITDVIGTEAYQVEDIQPPAEESPQLLHNMWQSWTELSGRADQRALIEIYHDSQSDLQEAQSLFALGQLSLAERAWAEQANLRVCHEVQGLLSTKNRYHRPIIDELNEKLADKFFVNFSLFQSLPDAWGIDQVFPVLPLSGLDKAPERRAVMLDITCDSDGIVDQYVDGQGIETTLPVPAWSAESPYLMGFFMVGAYQEILGDMHNLFGDTNSAVVSIEENGMTNIESVLAGDTVADVLRYVNLDAVDFMRTYEELVNQHIVEEERAQILEELQVGLKGYTYLEDFS.

Position 101 is an N6-(pyridoxal phosphate)lysine (K101). Residue 286 to 296 (FDVGGGLAVDY) participates in substrate binding.

It belongs to the Orn/Lys/Arg decarboxylase class-II family. SpeA subfamily. Requires Mg(2+) as cofactor. The cofactor is pyridoxal 5'-phosphate.

The enzyme catalyses L-arginine + H(+) = agmatine + CO2. It functions in the pathway amine and polyamine biosynthesis; agmatine biosynthesis; agmatine from L-arginine: step 1/1. Functionally, catalyzes the biosynthesis of agmatine from arginine. This chain is Biosynthetic arginine decarboxylase, found in Shewanella sp. (strain MR-7).